Reading from the N-terminus, the 320-residue chain is Putative protein FRMPD2-like (320 aa).

PDZ domains are found at residues 1–46 (MTSI…ERRV) and 90–178 (EVKL…CRPP). Residues 215 to 239 (DQEDSWRDSASPDAGEGLGLRPESS) form a disordered region.

In Homo sapiens (Human), this protein is Putative protein FRMPD2-like.